The following is a 232-amino-acid chain: Octanoyltransferase (232 aa).

The BPL/LPL catalytic domain occupies 44 to 219; it reads EHTGDELWVV…QLARQFGLVL (176 aa). Residues 83–90, 150–152, and 163–165 each bind substrate; these read RGGQVTYH, ALG, and GLS. The active-site Acyl-thioester intermediate is C181.

This sequence belongs to the LipB family.

It localises to the cytoplasm. It catalyses the reaction octanoyl-[ACP] + L-lysyl-[protein] = N(6)-octanoyl-L-lysyl-[protein] + holo-[ACP] + H(+). Its pathway is protein modification; protein lipoylation via endogenous pathway; protein N(6)-(lipoyl)lysine from octanoyl-[acyl-carrier-protein]: step 1/2. In terms of biological role, catalyzes the transfer of endogenously produced octanoic acid from octanoyl-acyl-carrier-protein onto the lipoyl domains of lipoate-dependent enzymes. Lipoyl-ACP can also act as a substrate although octanoyl-ACP is likely to be the physiological substrate. The protein is Octanoyltransferase of Xanthomonas campestris pv. campestris (strain B100).